We begin with the raw amino-acid sequence, 202 residues long: Adenylyl-sulfate kinase (202 aa).

Gly31 to Ser38 provides a ligand contact to ATP. Ser105 acts as the Phosphoserine intermediate in catalysis.

This sequence belongs to the APS kinase family.

It carries out the reaction adenosine 5'-phosphosulfate + ATP = 3'-phosphoadenylyl sulfate + ADP + H(+). Its pathway is sulfur metabolism; hydrogen sulfide biosynthesis; sulfite from sulfate: step 2/3. Its function is as follows. Catalyzes the synthesis of activated sulfate. The sequence is that of Adenylyl-sulfate kinase (MET14) from Saccharomyces bayanus (Yeast).